The primary structure comprises 441 residues: Putative serine/threonine-protein kinase F31E3.2 (441 aa).

The segment covering 1 to 16 has biased composition (basic residues); sequence MGNVATRKRPGCHHHI. The interval 1–41 is disordered; sequence MGNVATRKRPGCHHHIGRNEENLDDDEDGPAKKRLRIGEPQ. Positions 126-381 constitute a Protein kinase domain; sequence FVLERQLGRG…FTVLHAHPFF (256 aa). ATP contacts are provided by residues 132–140 and lysine 156; that span reads LGRGSFGVV. The Proton acceptor role is filled by aspartate 253.

The protein belongs to the protein kinase superfamily. Ser/Thr protein kinase family.

The catalysed reaction is L-seryl-[protein] + ATP = O-phospho-L-seryl-[protein] + ADP + H(+). It carries out the reaction L-threonyl-[protein] + ATP = O-phospho-L-threonyl-[protein] + ADP + H(+). This is Putative serine/threonine-protein kinase F31E3.2 from Caenorhabditis elegans.